Reading from the N-terminus, the 686-residue chain is ATP-dependent zinc metalloprotease FTSH 1, chloroplastic (686 aa).

The N-terminal 16 residues, Met-1–Thr-16, are a transit peptide targeting the chloroplast. Residues Phe-173–Leu-193 traverse the membrane as a helical segment. ATP is bound at residue Gly-272–Thr-279. His-494 provides a ligand contact to Zn(2+). The active site involves Glu-495. Residues His-498 and Asp-575 each coordinate Zn(2+).

It in the N-terminal section; belongs to the AAA ATPase family. The protein in the C-terminal section; belongs to the peptidase M41 family. Zn(2+) is required as a cofactor.

It localises to the plastid. It is found in the chloroplast thylakoid membrane. Functionally, probable ATP-dependent zinc metallopeptidase. This Oryza sativa subsp. japonica (Rice) protein is ATP-dependent zinc metalloprotease FTSH 1, chloroplastic (FTSH1).